The chain runs to 418 residues: Serine--tRNA ligase (418 aa).

An L-serine-binding site is contributed by Thr-226–Glu-228. ATP is bound by residues Arg-257–Glu-259 and Val-273. Glu-280 provides a ligand contact to L-serine. Glu-344 to Ser-347 lines the ATP pocket. L-serine is bound at residue Thr-379.

It belongs to the class-II aminoacyl-tRNA synthetase family. Type-1 seryl-tRNA synthetase subfamily. Homodimer. The tRNA molecule binds across the dimer.

The protein resides in the cytoplasm. The enzyme catalyses tRNA(Ser) + L-serine + ATP = L-seryl-tRNA(Ser) + AMP + diphosphate + H(+). It catalyses the reaction tRNA(Sec) + L-serine + ATP = L-seryl-tRNA(Sec) + AMP + diphosphate + H(+). Its pathway is aminoacyl-tRNA biosynthesis; selenocysteinyl-tRNA(Sec) biosynthesis; L-seryl-tRNA(Sec) from L-serine and tRNA(Sec): step 1/1. Functionally, catalyzes the attachment of serine to tRNA(Ser). Is also able to aminoacylate tRNA(Sec) with serine, to form the misacylated tRNA L-seryl-tRNA(Sec), which will be further converted into selenocysteinyl-tRNA(Sec). In Mycobacteroides abscessus (strain ATCC 19977 / DSM 44196 / CCUG 20993 / CIP 104536 / JCM 13569 / NCTC 13031 / TMC 1543 / L948) (Mycobacterium abscessus), this protein is Serine--tRNA ligase.